The primary structure comprises 417 residues: uncharacterized protein (417 aa).

An N-terminal signal peptide occupies residues 1 to 21 (MPYYWGAILIGGVFLAGCTQN).

This is an uncharacterized protein from Methanocaldococcus jannaschii (strain ATCC 43067 / DSM 2661 / JAL-1 / JCM 10045 / NBRC 100440) (Methanococcus jannaschii).